The sequence spans 763 residues: MAP7 domain-containing protein 2 (763 aa).

Residues 1 to 11 (MERSGGNGAGA) are compositionally biased toward gly residues. Disordered stretches follow at residues 1 to 72 (MERS…REKC), 102 to 127 (LEEQ…LREE), and 140 to 531 (ERTQ…KAMI). Over residues 12–31 (RAGAPSEGAAKGSSLLSAKS) the composition is skewed to low complexity. The span at 53-72 (LKSDERQRLAKERREEREKC) shows a compositional bias: basic and acidic residues. 2 stretches are compositionally biased toward polar residues: residues 184–212 (PSDT…NLPK) and 241–251 (LKSSYKSSPTR). Residues 312 to 321 (KRSSSPVKSK) show a composition bias toward low complexity. 3 stretches are compositionally biased toward basic and acidic residues: residues 354–372 (ETLK…KEGA), 381–420 (PREE…EHSA), and 437–531 (LAEK…KAMI). A coiled-coil region spans residues 434–575 (AKILAEKRRQ…QERLERKKRI (142 aa)).

It belongs to the MAP7 family. In terms of assembly, interacts (via N-terminus) with microtubules; facilitates microtubule stabilization. Interacts with kinesin-1 family members, KIF5A, KIF5B and KIF5C. Detected only in the brain and testis (at the protein level).

It localises to the cytoplasm. It is found in the cytoskeleton. Its subcellular location is the microtubule organizing center. The protein resides in the centrosome. The protein localises to the cell projection. It localises to the axon. In terms of biological role, microtubule-stabilizing protein involved in the control of cell motility and neurite outgrowth. Acts as a critical cofactor for kinesin transport; in the proximal axon regulates kinesin-1 family members, KIF5A, KIF5B and KIF5C recruitment to microtubules and contributes to kinesin-1-mediated transport in the axons. The polypeptide is MAP7 domain-containing protein 2 (Map7d2) (Rattus norvegicus (Rat)).